The chain runs to 256 residues: MSVKNNPIGVIDSGVGGISVLKEAVKQLPYENFIYYGDSKNAPYGIKSVDEVRNLTFNVVEKLLKLNIKALVVACNTATSAAIDELREKYKNIPVIGIEPALKPAVELKRRGKIIIMATPMTLSEVKFKNLMEKYEKDSEIVKLPCPGLVELIEDGIVEGEKMQEYLRNKFKDYEKDDIAAFVLGCTHYPFVKKEIASIARDVPIIDGSQGTVMQLKRKLDKYDILNIGSEKGKIKIMNSLKDDKILDLSHRLLDL.

Substrate-binding positions include 12–13 and 44–45; these read DS and YG. Residue cysteine 75 is the Proton donor/acceptor of the active site. 76–77 contributes to the substrate binding site; sequence NT. Cysteine 186 serves as the catalytic Proton donor/acceptor. A substrate-binding site is contributed by 187–188; the sequence is TH.

It belongs to the aspartate/glutamate racemases family.

It carries out the reaction L-glutamate = D-glutamate. The protein operates within cell wall biogenesis; peptidoglycan biosynthesis. In terms of biological role, provides the (R)-glutamate required for cell wall biosynthesis. In Clostridium acetobutylicum (strain ATCC 824 / DSM 792 / JCM 1419 / IAM 19013 / LMG 5710 / NBRC 13948 / NRRL B-527 / VKM B-1787 / 2291 / W), this protein is Glutamate racemase.